A 198-amino-acid polypeptide reads, in one-letter code: Protein GrpE (198 aa).

The interval 1-56 (MVEKKKSQAEKNNQSATEEEIEKAVKGSKRDSNAADEKNSASAAASSSAVSDAEPA) is disordered. The span at 22-39 (EKAVKGSKRDSNAADEKN) shows a compositional bias: basic and acidic residues. The span at 40–56 (SASAAASSSAVSDAEPA) shows a compositional bias: low complexity.

It belongs to the GrpE family. In terms of assembly, homodimer.

It is found in the cytoplasm. Its function is as follows. Participates actively in the response to hyperosmotic and heat shock by preventing the aggregation of stress-denatured proteins, in association with DnaK and GrpE. It is the nucleotide exchange factor for DnaK and may function as a thermosensor. Unfolded proteins bind initially to DnaJ; upon interaction with the DnaJ-bound protein, DnaK hydrolyzes its bound ATP, resulting in the formation of a stable complex. GrpE releases ADP from DnaK; ATP binding to DnaK triggers the release of the substrate protein, thus completing the reaction cycle. Several rounds of ATP-dependent interactions between DnaJ, DnaK and GrpE are required for fully efficient folding. In Oenococcus oeni (strain ATCC BAA-331 / PSU-1), this protein is Protein GrpE.